We begin with the raw amino-acid sequence, 389 residues long: Ankyrin repeat domain-containing protein 42 (389 aa).

The disordered stretch occupies residues M1–S21. Polar residues predominate over residues S7–P19. ANK repeat units lie at residues V25–H60, R64–A93, R97–V126, R130–D159, N163–Q192, N200–D232, T235–E265, N269–I298, and A302–D332.

The sequence is that of Ankyrin repeat domain-containing protein 42 (ANKRD42) from Homo sapiens (Human).